Here is a 417-residue protein sequence, read N- to C-terminus: Mast cell carboxypeptidase A (417 aa).

The N-terminal stretch at 1–15 (MRFFLLMAVIYTTLA) is a signal peptide. The propeptide at 16–109 (IAPVHFDREK…IEKQFDVKDE (94 aa)) is activation peptide. The Peptidase M14 domain maps to 118–412 (KYNDWDKIVS…LSVKFIAKYI (295 aa)). Disulfide bonds link C173–C186 and C245–C268. Zn(2+) is bound by residues H176 and E179. H304 is a binding site for Zn(2+). Residue E378 is the Proton donor/acceptor of the active site.

It belongs to the peptidase M14 family. Zn(2+) is required as a cofactor.

The protein localises to the cytoplasmic vesicle. It is found in the secretory vesicle. The catalysed reaction is Release of a C-terminal amino acid, but little or no action with -Asp, -Glu, -Arg, -Lys or -Pro.. The chain is Mast cell carboxypeptidase A (Cpa3) from Mus musculus (Mouse).